A 251-amino-acid polypeptide reads, in one-letter code: DNA repair protein RecO (251 aa).

This sequence belongs to the RecO family.

Functionally, involved in DNA repair and RecF pathway recombination. This chain is DNA repair protein RecO, found in Nitratidesulfovibrio vulgaris (strain ATCC 29579 / DSM 644 / CCUG 34227 / NCIMB 8303 / VKM B-1760 / Hildenborough) (Desulfovibrio vulgaris).